A 222-amino-acid chain; its full sequence is TPR repeat-containing protein BH2049 (222 aa).

TPR repeat units follow at residues 34–67 and 169–202; these read AEPL…NREH and PVGL…KEDK.

The chain is TPR repeat-containing protein BH2049 from Halalkalibacterium halodurans (strain ATCC BAA-125 / DSM 18197 / FERM 7344 / JCM 9153 / C-125) (Bacillus halodurans).